Reading from the N-terminus, the 241-residue chain is 1-(5-phosphoribosyl)-5-[(5-phosphoribosylamino)methylideneamino] imidazole-4-carboxamide isomerase (241 aa).

Catalysis depends on Asp-8, which acts as the Proton acceptor. The active-site Proton donor is the Asp-129.

The protein belongs to the HisA/HisF family.

Its subcellular location is the cytoplasm. The enzyme catalyses 1-(5-phospho-beta-D-ribosyl)-5-[(5-phospho-beta-D-ribosylamino)methylideneamino]imidazole-4-carboxamide = 5-[(5-phospho-1-deoxy-D-ribulos-1-ylimino)methylamino]-1-(5-phospho-beta-D-ribosyl)imidazole-4-carboxamide. It functions in the pathway amino-acid biosynthesis; L-histidine biosynthesis; L-histidine from 5-phospho-alpha-D-ribose 1-diphosphate: step 4/9. The chain is 1-(5-phosphoribosyl)-5-[(5-phosphoribosylamino)methylideneamino] imidazole-4-carboxamide isomerase from Rhodospirillum rubrum (strain ATCC 11170 / ATH 1.1.1 / DSM 467 / LMG 4362 / NCIMB 8255 / S1).